The primary structure comprises 208 residues: Protein Nef (208 aa).

Gly2 is lipidated: N-myristoyl glycine; by host. At Ser6 the chain carries Phosphoserine; by host. The segment at 16-51 is disordered; that stretch reads IRERMRRTPPTPPAAEGVGAVSQDLERRGAITSSNT. Residues 65 to 68 are acidic; interacts with host PACS1 and PACS2; stabilizes the interaction of NEF/MHC-I with host AP1M1; necessary for MHC-I internalization; it reads EEDE. The tract at residues 72 to 81 is SH3-binding; interaction with Src family tyrosine kinases; that stretch reads PVRPQVPLRP. The short motif at 75–78 is the PxxP; stabilizes the interaction of NEF/MHC-I with host AP1M1; necessary for MHC-I internalization element; sequence PQVP. The interval 111-127 is mediates dimerization, Nef-PTE1 interaction; the sequence is EILDLWVYHTQGYFPDW. The tract at residues 151-183 is binding to ATP6V1H; the sequence is VDPEEVEKANEGENNCLLHPMSQHGMEDEDKEV. A Dileucine internalization motif; necessary for CD4 internalization motif is present at residues 167-168; the sequence is LL. Residues 177–178 carry the Diacidic; necessary for CD4 internalization motif; it reads ED.

The protein belongs to the lentivirus primate group Nef protein family. As to quaternary structure, monomer; cytosolic form. Homodimer; membrane bound form. Interacts with Nef associated p21-activated kinase (PAK2); this interaction activates PAK2. Associates with the Nef-MHC-I-AP1 complex; this complex is required for MHC-I internalization. Interacts (via C-terminus) with host PI3-kinase. Interacts with host PACS1; this interaction seems to be weak. Interacts with host PACS2. Interacts with host LCK and MAPK3; these interactions inhibit the kinase activity of the latter. Interacts with host ATP6V1H; this interaction may play a role in CD4 endocytosis. Associates with the CD4-Nef-AP2 complex; this complex is required for CD4 internalization. Interacts with host AP2 subunit alpha and AP2 subunit sigma2. Interacts with TCR-zeta chain; this interaction up-regulates the Fas ligand (FasL) surface expression. Interacts with host HCK, LYN, and SRC; these interactions activate the Src family kinases. Interacts with MAP3K5; this interaction inhibits the Fas and TNFR-mediated death signals. Interacts with beta-COP and PTE1. Interacts with human RACK1; this increases Nef phosphorylation by PKC. Interacts with TP53; this interaction decreases the half-life of TP53, protecting the infected cell against p53-mediated apoptosis. The virion-associated Nef proteins are cleaved by the viral protease to release the soluble C-terminal core protein. Nef is probably cleaved concomitantly with viral structural proteins on maturation of virus particles. Post-translationally, myristoylated. In terms of processing, phosphorylated on serine residues, probably by host PKCdelta and theta.

The protein localises to the host cell membrane. The protein resides in the virion. It is found in the secreted. Its subcellular location is the host Golgi apparatus membrane. Its function is as follows. Factor of infectivity and pathogenicity, required for optimal virus replication. Alters numerous pathways of T-lymphocyte function and down-regulates immunity surface molecules in order to evade host defense and increase viral infectivity. Alters the functionality of other immunity cells, like dendritic cells, monocytes/macrophages and NK cells. Functionally, in infected CD4(+) T-lymphocytes, down-regulates the surface MHC-I, mature MHC-II, CD4, CD28, CCR5 and CXCR4 molecules. Mediates internalization and degradation of host CD4 through the interaction of with the cytoplasmic tail of CD4, the recruitment of AP-2 (clathrin adapter protein complex 2), internalization through clathrin coated pits, and subsequent transport to endosomes and lysosomes for degradation. Diverts host MHC-I molecules to the trans-Golgi network-associated endosomal compartments by an endocytic pathway to finally target them for degradation. MHC-I down-regulation may involve AP-1 (clathrin adapter protein complex 1) or possibly Src family kinase-ZAP70/Syk-PI3K cascade recruited by PACS2. In consequence infected cells are masked for immune recognition by cytotoxic T-lymphocytes. Decreasing the number of immune receptors also prevents reinfection by more HIV particles (superinfection). Down-regulates host SERINC3 and SERINC5 thereby excluding these proteins from the viral particles. Virion infectivity is drastically higher when SERINC3 or SERINC5 are excluded from the viral envelope, because these host antiviral proteins impair the membrane fusion event necessary for subsequent virion penetration. In terms of biological role, bypasses host T-cell signaling by inducing a transcriptional program nearly identical to that of anti-CD3 cell activation. Interaction with TCR-zeta chain up-regulates the Fas ligand (FasL). Increasing surface FasL molecules and decreasing surface MHC-I molecules on infected CD4(+) cells send attacking cytotoxic CD8+ T-lymphocytes into apoptosis. Plays a role in optimizing the host cell environment for viral replication without causing cell death by apoptosis. Protects the infected cells from apoptosis in order to keep them alive until the next virus generation is ready to strike. Inhibits the Fas and TNFR-mediated death signals by blocking MAP3K5/ASK1. Decreases the half-life of TP53, protecting the infected cell against p53-mediated apoptosis. Inhibits the apoptotic signals regulated by the Bcl-2 family proteins through the formation of a Nef/PI3-kinase/PAK2 complex that leads to activation of PAK2 and induces phosphorylation of host BAD. Its function is as follows. Extracellular Nef protein targets CD4(+) T-lymphocytes for apoptosis by interacting with CXCR4 surface receptors. The polypeptide is Protein Nef (Human immunodeficiency virus type 1 group M subtype F1 (isolate 93BR020) (HIV-1)).